Consider the following 167-residue polypeptide: MIIFTDVISGDELLSDAYDVKLVDDVVYEADCAMVNVNNGDVDIGANPSAEEGGEDLEDGTETVNNVVYSFRLQQTSFDKKSFMTYMKGYMKRVKAHLAEKNPEAIEAFENGAKTYFKKVVSSFGDWDFYTGESMDPDGMVVLLNYREDGTTPYVAIWKHGVSEDKI.

The 167-residue stretch at 1–167 folds into the TCTP domain; it reads MIIFTDVISG…WKHGVSEDKI (167 aa).

Belongs to the TCTP family.

It localises to the cytoplasm. The protein localises to the cytoskeleton. Functionally, involved in protein synthesis. Involved in microtubule stabilization. The chain is Translationally-controlled tumor protein homolog from Debaryomyces hansenii (strain ATCC 36239 / CBS 767 / BCRC 21394 / JCM 1990 / NBRC 0083 / IGC 2968) (Yeast).